The following is a 550-amino-acid chain: Nucleoside hydrolase 4 (550 aa).

The protein belongs to the IUNH family.

The protein resides in the cytoplasm. Functionally, may be involved in the degradation of nucleosides. The chain is Nucleoside hydrolase 4 from Arabidopsis thaliana (Mouse-ear cress).